We begin with the raw amino-acid sequence, 578 residues long: Protein BONZAI 1 (578 aa).

Gly-2 is lipidated: N-myristoyl glycine. C2 domains lie at 26–163 and 176–303; these read ALGA…TSTL and QPHH…NFSL. Residues Asp-63, Asp-69, Asp-122, and Asp-124 each coordinate Ca(2+). Residues 341 to 560 form the VWFA domain; it reads NFMVAIDFTA…SVVQALLAEL (220 aa).

The protein belongs to the copine family. As to quaternary structure, interacts (via VWA domain) with BAP1 and BAP2. Interacts with HSP70-1 and HSP70-2. Requires Ca(2+) as cofactor. In terms of processing, based on mass spectrometry analysis, the N-peptide must be modified and there might be additional modifications other than myristoylation. Expressed in roots and flowers and, at higher levels, in leaves and stems. Strongly expressed in growing tissues. Not detected in green siliques.

The protein localises to the cell membrane. Its function is as follows. Negative regulator of cell death and defense responses. Negative regulator of several R genes, including SNC1. May have effects in promoting growth and development. May function in membrane trafficking and in fusion of vesicles with plasma membrane at low temperature. Exhibits calcium-dependent phospholipid binding properties. The chain is Protein BONZAI 1 (BON1) from Arabidopsis thaliana (Mouse-ear cress).